Consider the following 237-residue polypeptide: Orotidine 5'-phosphate decarboxylase (237 aa).

Residues D11, K34, 61–70, T124, R186, Q195, G215, and R216 contribute to the substrate site; that span reads DLKLHDIPNT. K63 acts as the Proton donor in catalysis.

The protein belongs to the OMP decarboxylase family. Type 1 subfamily. Homodimer.

It carries out the reaction orotidine 5'-phosphate + H(+) = UMP + CO2. It participates in pyrimidine metabolism; UMP biosynthesis via de novo pathway; UMP from orotate: step 2/2. Functionally, catalyzes the decarboxylation of orotidine 5'-monophosphate (OMP) to uridine 5'-monophosphate (UMP). The chain is Orotidine 5'-phosphate decarboxylase from Lactococcus lactis subsp. lactis (strain IL1403) (Streptococcus lactis).